We begin with the raw amino-acid sequence, 136 residues long: Protein NrdI (136 aa).

Belongs to the NrdI family.

Its function is as follows. Probably involved in ribonucleotide reductase function. This chain is Protein NrdI, found in Shigella boydii serotype 4 (strain Sb227).